The sequence spans 470 residues: Argininosuccinate synthase (470 aa).

ATP contacts are provided by residues 17–25 and alanine 43; that span reads AFSGGLDTS. Residue tyrosine 99 participates in L-citrulline binding. Residues glycine 129 and threonine 131 each contribute to the ATP site. 3 residues coordinate L-aspartate: threonine 131, asparagine 135, and aspartate 136. Position 135 (asparagine 135) interacts with L-citrulline. Residue aspartate 136 coordinates ATP. L-citrulline-binding residues include arginine 139 and serine 192. ATP is bound at residue aspartate 194. Threonine 201, glutamate 203, and glutamate 280 together coordinate L-citrulline. The interval 448–470 is disordered; that stretch reads IASRGESSGDELLDRAAMESGTD.

The protein belongs to the argininosuccinate synthase family. Type 2 subfamily. As to quaternary structure, homotetramer.

It localises to the cytoplasm. The enzyme catalyses L-citrulline + L-aspartate + ATP = 2-(N(omega)-L-arginino)succinate + AMP + diphosphate + H(+). Its pathway is amino-acid biosynthesis; L-arginine biosynthesis; L-arginine from L-ornithine and carbamoyl phosphate: step 2/3. The chain is Argininosuccinate synthase from Kineococcus radiotolerans (strain ATCC BAA-149 / DSM 14245 / SRS30216).